Reading from the N-terminus, the 584-residue chain is Interferon regulatory factor 2-binding protein 1 (584 aa).

The disordered stretch occupies residues 59-120 (HVLPEGRSPG…RYDRATSSSR (62 aa)). S66 is subject to Phosphoserine. Over residues 82-100 (STGSQGSQLPPPQAQAQPS) the composition is skewed to low complexity. S125 carries the post-translational modification Phosphoserine. R177 bears the Omega-N-methylarginine mark. S186 carries the phosphoserine modification. The stretch at 197 to 217 (EKEKQQRNADCLAELNEAMRG) forms a coiled coil. K227 is covalently cross-linked (Glycyl lysine isopeptide (Lys-Gly) (interchain with G-Cter in SUMO2)). 2 disordered regions span residues 346 to 421 (PAEA…GVPS) and 433 to 495 (LGHS…GTGA). Over residues 354–369 (YPEPAPAALCGPPPRA) the composition is skewed to pro residues. A phosphoserine mark is found at S371, S384, S421, and S436. K438 is covalently cross-linked (Glycyl lysine isopeptide (Lys-Gly) (interchain with G-Cter in SUMO2)). Over residues 449-458 (AGGASPAASS) the composition is skewed to low complexity. Residues S453 and S457 each carry the phosphoserine modification. Residues 503–550 (CTLCRERLEDTHFVQCPSVPGHKFCFPCSREFIKAQGPAGEVYCPSGD) form an RING-type; degenerate zinc finger. Residues 503–550 (CTLCRERLEDTHFVQCPSVPGHKFCFPCSREFIKAQGPAGEVYCPSGD) are cys-rich.

It belongs to the IRF2BP family. In terms of assembly, interacts with IRF2. Part of a corepressor complex containing IRF2 and IRF2BP2. Interacts with JDP2.

It localises to the nucleus. The catalysed reaction is S-ubiquitinyl-[E2 ubiquitin-conjugating enzyme]-L-cysteine + [acceptor protein]-L-lysine = [E2 ubiquitin-conjugating enzyme]-L-cysteine + N(6)-ubiquitinyl-[acceptor protein]-L-lysine.. Functionally, acts as a transcriptional corepressor in a IRF2-dependent manner; this repression is not mediated by histone deacetylase activities. May act as an E3 ligase towards JDP2, enhancing its polyubiquitination. Represses ATF2-dependent transcriptional activation. This chain is Interferon regulatory factor 2-binding protein 1 (Irf2bp1), found in Mus musculus (Mouse).